A 99-amino-acid polypeptide reads, in one-letter code: uncharacterized protein (99 aa).

The tract at residues 50–77 (SAHWEDARSSGGTSPIRARAGSEGRGCQ) is disordered.

This is an uncharacterized protein from Homo sapiens (Human).